A 100-amino-acid polypeptide reads, in one-letter code: Urease subunit gamma (100 aa).

Belongs to the urease gamma subunit family. In terms of assembly, heterotrimer of UreA (gamma), UreB (beta) and UreC (alpha) subunits. Three heterotrimers associate to form the active enzyme.

The protein resides in the cytoplasm. It carries out the reaction urea + 2 H2O + H(+) = hydrogencarbonate + 2 NH4(+). The protein operates within nitrogen metabolism; urea degradation; CO(2) and NH(3) from urea (urease route): step 1/1. The polypeptide is Urease subunit gamma (Hahella chejuensis (strain KCTC 2396)).